The primary structure comprises 509 residues: Ethanolamine-phosphate phospho-lyase (509 aa).

At Lys-279 the chain carries N6-(pyridoxal phosphate)lysine. Positions 451–474 (EKTSAKRKVHNENSGDTNAKEKET) are enriched in basic and acidic residues. The interval 451 to 509 (EKTSAKRKVHNENSGDTNAKEKETCSSNSQERNPNDHAYRQSNGLHPESPTFTRKRIRT) is disordered.

The protein belongs to the class-III pyridoxal-phosphate-dependent aminotransferase family. As to quaternary structure, homotetramer. It depends on pyridoxal 5'-phosphate as a cofactor.

The protein resides in the mitochondrion. It catalyses the reaction phosphoethanolamine + H2O = acetaldehyde + NH4(+) + phosphate. In terms of biological role, catalyzes the pyridoxal-phosphate-dependent breakdown of phosphoethanolamine, converting it to ammonia, inorganic phosphate and acetaldehyde. The chain is Ethanolamine-phosphate phospho-lyase (etnppl) from Xenopus laevis (African clawed frog).